The following is a 305-amino-acid chain: Aquaporin-1 (305 aa).

The tract at residues 1–34 (MSSNDSNDTDKQHTRLDPTGVDDAYIPPEQPETK) is disordered. At 1–48 (MSSNDSNDTDKQHTRLDPTGVDDAYIPPEQPETKHHRFKISRDTLRDH) the chain is on the cytoplasmic side. A helical transmembrane segment spans residues 49–69 (FIAAVGEFCGTFMFLWCAYVI). The Extracellular portion of the chain corresponds to 70–91 (CNVANHDVALVAAPDGSHPGQL). A helical transmembrane segment spans residues 92–112 (IMIAIGFGFSVMFSIWCFAGV). Residues 113–136 (SGGALNPAMSLSLCLARAVSPTRC) lie on the Cytoplasmic side of the membrane. An NPA 1 motif is present at residues 118–120 (NPA). A helical transmembrane segment spans residues 137-157 (VVMWVSQIVAGMAAGGAASAM). Topologically, residues 158-176 (TPGEVLFANSLGLGCSRTR) are extracellular. A helical membrane pass occupies residues 177 to 197 (GLFLEMFGTAILCLTVLMTAV). Over 198-203 (EKRETN) the chain is Cytoplasmic. A helical transmembrane segment spans residues 204–224 (FMAALPIGISLFIAHVALTAY). Residues 225 to 248 (TGTGVNPARSLGAAVAARYFPHYH) are Extracellular-facing. The NPA 2 motif lies at 230–232 (NPA). Residues 249 to 269 (WIYWIGTLLGSILAWSVWQLL) traverse the membrane as a helical segment. The Cytoplasmic portion of the chain corresponds to 270–305 (QILDYTTYVTAEKAASTKEKAQKKGETSSSSAVAEV). Over residues 286-295 (TKEKAQKKGE) the composition is skewed to basic and acidic residues. Residues 286–305 (TKEKAQKKGETSSSSAVAEV) are disordered. Over residues 296-305 (TSSSSAVAEV) the composition is skewed to polar residues.

This sequence belongs to the MIP/aquaporin (TC 1.A.8) family.

Its subcellular location is the endoplasmic reticulum membrane. It localises to the cell membrane. Water channel required to facilitate the transport of water across membranes. Involved in sporulation, freeze tolerance and osmotolerance. Is non-functional in most laboratory strains. The polypeptide is Aquaporin-1 (AQY1) (Saccharomyces cerevisiae (strain ATCC 204508 / S288c) (Baker's yeast)).